A 279-amino-acid polypeptide reads, in one-letter code: Isopentenyl-diphosphate delta-isomerase idi1 (279 aa).

Position 78 (lysine 78) interacts with substrate. Residues histidine 82 and histidine 93 each coordinate Mg(2+). One can recognise a Nudix hydrolase domain in the interval 91-249; it reads LLHRAFSVFL…GLKFTPWFKL (159 aa). Substrate-binding residues include glutamine 111 and lysine 116. Cysteine 128 is a catalytic residue. Serine 129 contributes to the substrate binding site. The short motif at 129–162 is the Nudix box element; the sequence is SHPLGIPGETGAELDAAVLGVKRAAQRKLDQELG. The Mg(2+) site is built by glutamate 191 and glutamate 193. Glutamate 193 is a catalytic residue.

Belongs to the IPP isomerase type 1 family. The cofactor is Mg(2+).

The catalysed reaction is isopentenyl diphosphate = dimethylallyl diphosphate. The protein operates within isoprenoid biosynthesis; dimethylallyl diphosphate biosynthesis; dimethylallyl diphosphate from isopentenyl diphosphate: step 1/1. Functionally, isopentenyl-diphosphate delta-isomerase; part of the second module of ergosterol biosynthesis pathway that includes the middle steps of the pathway. Idi1 catalyzes the 1,3-allylic rearrangement of isopentenyl (IPP) to its highly electrophilic allylic isomer, dimethylallyl diphosphate (DMAPP). The second module is carried out in the vacuole and involves the formation of farnesyl diphosphate, which is also an important intermediate in the biosynthesis of ubiquinone, dolichol, heme and prenylated proteins. Activity by the mevalonate kinase erg12 (AFUA_4G07780) first converts mevalonate into 5-phosphomevalonate. 5-phosphomevalonate is then further converted to 5-diphosphomevalonate by the phosphomevalonate kinase erg8 (AFUA_5G10680). The diphosphomevalonate decarboxylase mvd1 (AFUA_4G07130) then produces isopentenyl diphosphate. The isopentenyl-diphosphate delta-isomerase idi1 (AFUA_6G11160) then catalyzes the 1,3-allylic rearrangement of the homoallylic substrate isopentenyl (IPP) to its highly electrophilic allylic isomer, dimethylallyl diphosphate (DMAPP). Finally the farnesyl diphosphate synthase erg20 (AFUA_5G02450) catalyzes the sequential condensation of isopentenyl pyrophosphate with dimethylallyl pyrophosphate, and then with the resultant geranylpyrophosphate to the ultimate product farnesyl pyrophosphate. In Aspergillus fumigatus (strain ATCC MYA-4609 / CBS 101355 / FGSC A1100 / Af293) (Neosartorya fumigata), this protein is Isopentenyl-diphosphate delta-isomerase idi1.